A 431-amino-acid chain; its full sequence is Beta-lactamase hydrolase-like protein (431 aa).

Histidine 212, histidine 214, and histidine 286 together coordinate Zn(2+). Residue aspartate 309 participates in substrate binding.

Belongs to the metallo-beta-lactamase superfamily. It depends on Zn(2+) as a cofactor.

In terms of biological role, could play a role in cell adherence or biofilm development. The polypeptide is Beta-lactamase hydrolase-like protein (Xylella fastidiosa (strain Temecula1 / ATCC 700964)).